The following is a 527-amino-acid chain: GMP synthase [glutamine-hydrolyzing] (527 aa).

One can recognise a Glutamine amidotransferase type-1 domain in the interval 20-208 (SVVILDYGSQ…LFDVCGCAPT (189 aa)). Residue Cys97 is the Nucleophile of the active site. Residues His182 and Glu184 contribute to the active site. Residues 209-402 (WTAESFVEQA…LGLPEEIVQR (194 aa)) form the GMPS ATP-PPase domain. An ATP-binding site is contributed by 236–242 (SGGVDSS).

In terms of assembly, homodimer.

The enzyme catalyses XMP + L-glutamine + ATP + H2O = GMP + L-glutamate + AMP + diphosphate + 2 H(+). The protein operates within purine metabolism; GMP biosynthesis; GMP from XMP (L-Gln route): step 1/1. Functionally, catalyzes the synthesis of GMP from XMP. In Thermomicrobium roseum (strain ATCC 27502 / DSM 5159 / P-2), this protein is GMP synthase [glutamine-hydrolyzing].